Here is a 426-residue protein sequence, read N- to C-terminus: Serine--tRNA ligase (426 aa).

233-235 (TAE) provides a ligand contact to L-serine. ATP is bound at residue 264–266 (RSE). Glutamate 287 serves as a coordination point for L-serine. ATP is bound at residue 351-354 (EISS). Residue serine 385 coordinates L-serine.

This sequence belongs to the class-II aminoacyl-tRNA synthetase family. Type-1 seryl-tRNA synthetase subfamily. As to quaternary structure, homodimer. The tRNA molecule binds across the dimer.

The protein localises to the cytoplasm. The enzyme catalyses tRNA(Ser) + L-serine + ATP = L-seryl-tRNA(Ser) + AMP + diphosphate + H(+). It catalyses the reaction tRNA(Sec) + L-serine + ATP = L-seryl-tRNA(Sec) + AMP + diphosphate + H(+). It functions in the pathway aminoacyl-tRNA biosynthesis; selenocysteinyl-tRNA(Sec) biosynthesis; L-seryl-tRNA(Sec) from L-serine and tRNA(Sec): step 1/1. Functionally, catalyzes the attachment of serine to tRNA(Ser). Is also able to aminoacylate tRNA(Sec) with serine, to form the misacylated tRNA L-seryl-tRNA(Sec), which will be further converted into selenocysteinyl-tRNA(Sec). The chain is Serine--tRNA ligase from Brachyspira hyodysenteriae (strain ATCC 49526 / WA1).